The following is a 371-amino-acid chain: Solute carrier family 35 member F6 (371 aa).

The first 18 residues, 1–18 (MAWTKYQLFLAGLMLVTG), serve as a signal peptide directing secretion. The next 2 membrane-spanning stretches (helical) occupy residues 48–68 (FLQA…FYLL) and 89–109 (LLFL…YVAL). An EamA domain is found at 104–160 (LMYVALNMTSASSFQMLRGAVIIFTGLFSVAFLGRRLVLSQWLGILATIAGLVVVGL). N-linked (GlcNAc...) asparagine glycosylation is present at N110. The next 7 helical transmembrane spans lie at 117 to 137 (FQML…AFLG), 140 to 160 (LVLS…VVGL), 176 to 196 (VITG…QMVL), 216 to 236 (GLFG…IPAG), 261 to 281 (LIAV…FAGI), 295 to 312 (LDSL…ALGW), and 317 to 336 (ALQI…YNGL). The interval 352 to 371 (EESEQERLLGGTRTPINDAS) is disordered. T365 bears the Phosphothreonine mark.

This sequence belongs to the SLC35F solute transporter family. In terms of assembly, interacts with SLC25A5. As to expression, expressed in pancreatic ductal adenocarcinoma (PDAC) (at protein level). Strongly expressed in prostate and thyroid. Weakly expressed in lung, heart, liver and kidney.

The protein resides in the mitochondrion. Its subcellular location is the lysosome membrane. Involved in the maintenance of mitochondrial membrane potential in pancreatic ductal adenocarcinoma (PDAC) cells. Promotes pancreatic ductal adenocarcinoma (PDAC) cell growth. May play a role as a nucleotide-sugar transporter. This chain is Solute carrier family 35 member F6 (SLC35F6), found in Homo sapiens (Human).